Here is a 347-residue protein sequence, read N- to C-terminus: Homoisocitrate dehydrogenase (347 aa).

Residue 68–70 (ITS) coordinates NADH. Ser70 serves as a coordination point for (2R,3S)-homoisocitrate. Ser81 is modified (phosphoserine). Positions 87, 97, 128, 135, 181, and 183 each coordinate (2R,3S)-homoisocitrate. Asn183 is an NADH binding site. The Mg(2+) site is built by Asp213, Asp237, and Asp241. Residues 270–274 (GSAPD) and Asn282 contribute to the NADH site.

The protein belongs to the isocitrate and isopropylmalate dehydrogenases family. Mg(2+) is required as a cofactor.

It catalyses the reaction (2R,3S)-homoisocitrate + NAD(+) = 2-oxoadipate + CO2 + NADH. The catalysed reaction is (2R,3S)-iso(homo)2citrate + NAD(+) = 2-oxoheptanedioate + CO2 + NADH. The enzyme catalyses (2R,3S)-iso(homo)3citrate + NAD(+) = 2-oxosuberate + CO2 + NADH. The protein operates within organic acid metabolism; 2-oxosuberate biosynthesis. Catalyzes the NAD-dependent oxidation and decarboxylation of (2R,3S)-homoisocitrate, (2R,3S)-homo(2)-isocitrate and (2R,3S)-homo(3)-isocitrate, into 2-oxoadipate, 2-oxopimelate (2-oxoheptanedioate), and 2-oxosuberate, respectively. All these substrates are intermediates in the biosynthesis of biotin and of 7-mercaptoheptanoate, a moiety of coenzyme B in methanoarchaea. Is also able to produce 2-oxoazelate from (2R,3S)-homo(4)-isocitrate in vitro, but this substrate is probably not physiologically relevant. Is unable to use any isomer of isocitrate or isopropylmalate as a substrate, and NADP as an oxidant. This chain is Homoisocitrate dehydrogenase (aksF), found in Methanocaldococcus jannaschii (strain ATCC 43067 / DSM 2661 / JAL-1 / JCM 10045 / NBRC 100440) (Methanococcus jannaschii).